A 351-amino-acid chain; its full sequence is Transcriptional activator POG1 (351 aa).

Residues 1–27 are compositionally biased toward basic and acidic residues; it reads MKQEPHRQSEEKEKPKGPMAVEREHHT. A disordered region spans residues 1–56; the sequence is MKQEPHRQSEEKEKPKGPMAVEREHHTSLSSGTTMTASTGDESTNSRPVESSQTEK. The segment covering 28–56 has biased composition (polar residues); that stretch reads SLSSGTTMTASTGDESTNSRPVESSQTEK. A phosphoserine mark is found at Ser-152 and Ser-168. 2 disordered regions span residues 237–256 and 280–351; these read GPQAQLPTMSSNSESQTPVM and SMGP…PPPT. Polar residues-rich tracts occupy residues 241–256 and 287–296; these read QLPTMSSNSESQTPVM and IYGQQHQPQP. At Ser-314 the chain carries Phosphoserine.

It belongs to the POG1 family. Post-translationally, phosphorylated by CDC28.

The protein localises to the nucleus. Transcriptional activator which promotes cell cycle recovery with CLN2, after pheromone induced G1 arrest, probably inhibiting the ability of STE20 to activate the pheromone response pathway. Binds the promoters of genes that function in cell cycle regulation, cytoskeletal organization, and spindle assembly. May also be involved in stress-resistance. The sequence is that of Transcriptional activator POG1 (POG1) from Saccharomyces cerevisiae (strain YJM789) (Baker's yeast).